A 289-amino-acid chain; its full sequence is Splicing factor C9orf78 (289 aa).

Residues 1–12 (MPVVRKIFRRRR) show a composition bias toward basic residues. A disordered region spans residues 1–27 (MPVVRKIFRRRRGDSESEEDEQDSEEV). An interaction with SNRNP200 region spans residues 5–58 (RKIFRRRRGDSESEEDEQDSEEVRLKLEETREVQNLRKRPNGVSAVALLVGEKV). Residues Ser-15 and Ser-17 each carry the phosphoserine modification. At Tyr-147 the chain carries Phosphotyrosine. The span at 232-283 (LNAPIRRNKEEPKARPLRVGDTEKPEPERSPPNRKRPANEKATDDYHYEKFK) shows a compositional bias: basic and acidic residues. The tract at residues 232–289 (LNAPIRRNKEEPKARPLRVGDTEKPEPERSPPNRKRPANEKATDDYHYEKFKKMNRRY) is disordered. A Phosphothreonine modification is found at Thr-253. Position 261 is a phosphoserine (Ser-261).

The protein belongs to the TLS1 family. In terms of assembly, component of the spliceosome. Interacts with SNRNP200; the interaction is direct. Interacts with PRPF8.

The protein localises to the nucleus. It is found in the chromosome. Its subcellular location is the centromere. Plays a role in pre-mRNA splicing by promoting usage of the upstream 3'-splice site at alternative NAGNAG splice sites; these are sites featuring alternative acceptor motifs separated by only a few nucleotides. May also modulate exon inclusion events. Plays a role in spliceosomal remodeling by displacing WBP4 from SNRNP200 and may act to inhibit SNRNP200 helicase activity. Binds U5 snRNA. Required for proper chromosome segregation. Not required for splicing of shelterin components. The polypeptide is Splicing factor C9orf78 (C9orf78) (Homo sapiens (Human)).